The primary structure comprises 78 residues: Large ribosomal subunit protein eL20 (78 aa).

This sequence belongs to the eukaryotic ribosomal protein eL20 family. Part of the 50S ribosomal subunit. Binds 23S rRNA.

The polypeptide is Large ribosomal subunit protein eL20 (Thermococcus sibiricus (strain DSM 12597 / MM 739)).